The chain runs to 344 residues: Phosphate acyltransferase (344 aa).

This sequence belongs to the PlsX family. In terms of assembly, homodimer. Probably interacts with PlsY.

Its subcellular location is the cytoplasm. It carries out the reaction a fatty acyl-[ACP] + phosphate = an acyl phosphate + holo-[ACP]. It functions in the pathway lipid metabolism; phospholipid metabolism. Catalyzes the reversible formation of acyl-phosphate (acyl-PO(4)) from acyl-[acyl-carrier-protein] (acyl-ACP). This enzyme utilizes acyl-ACP as fatty acyl donor, but not acyl-CoA. The sequence is that of Phosphate acyltransferase from Erwinia tasmaniensis (strain DSM 17950 / CFBP 7177 / CIP 109463 / NCPPB 4357 / Et1/99).